The primary structure comprises 365 residues: MANGSVDMVVEAALQKQEKDRRLLRIWLRVVLFTLFCLVLVGGATRLTESGLSITEWKPIHGAIPPLSVAEWEEEFQLYKRIPQYQEINKGMSLDEFKTIFWWEWAHRLLARTIGLVFALPLAFFWLTGRVEKRLRLPLVGLLALGGFQGFVGWWMVSSGLVNRTDVSQYRLATHLTIACLIFAGCMWILRGLSHHSPDAADERTGRGFAALLTVLCLFQIYLGALVAGLNAGLSYNTWPLMDGSLVPGDLFLQQPWWINLFENPKTVQFVHRLGAYTLFAATLWHMVSMARALPGTPHARRAVLFFVLISVQAGLGITTLLMHVDIHVALAHQGMALILLGFSVAHWRGFIGEYPAPVAVEVRD.

5 helical membrane passes run 23–43 (LLRIWLRVVLFTLFCLVLVGG), 109–129 (LLARTIGLVFALPLAFFWLTG), 137–157 (LPLVGLLALGGFQGFVGWWMV), 172–192 (LATHLTIACLIFAGCMWILRG), and 208–228 (GFAALLTVLCLFQIYLGALVA). Residue His272 participates in heme binding. The next 3 helical transmembrane spans lie at 274–294 (LGAYTLFAATLWHMVSMARAL), 303–323 (AVLFFVLISVQAGLGITTLLM), and 327–347 (IHVALAHQGMALILLGFSVAH). His333 is a binding site for heme.

It belongs to the COX15/CtaA family. Type 2 subfamily. As to quaternary structure, interacts with CtaB. Requires heme b as cofactor.

Its subcellular location is the cell membrane. It catalyses the reaction Fe(II)-heme o + 2 A + H2O = Fe(II)-heme a + 2 AH2. Its pathway is porphyrin-containing compound metabolism; heme A biosynthesis; heme A from heme O: step 1/1. Its function is as follows. Catalyzes the conversion of heme O to heme A by two successive hydroxylations of the methyl group at C8. The first hydroxylation forms heme I, the second hydroxylation results in an unstable dihydroxymethyl group, which spontaneously dehydrates, resulting in the formyl group of heme A. The chain is Heme A synthase from Agrobacterium fabrum (strain C58 / ATCC 33970) (Agrobacterium tumefaciens (strain C58)).